The chain runs to 693 residues: MDRPDEGPPAKTRRLSSSESPQRDPPPPPPPPPLLRLPLPPPQQRPRLQEETEAAQVLADMRGVGLGPALPPPPPYVILEEGGIRAYFTLGAECPGWDSTIESGYGEAPPPTESLEALPTPEASGGSLEIDFQVVQSSSFGGEGALETCSAVGWAPQRLVDPKSKEEAIIIVEDEDEDERESMRSSRRRRRRRRRKQRKVKRESRERNAERMESILQALEDIQLDLEAVNIKAGKAFLRLKRKFIQMRRPFLERRDLIIQHIPGFWVKAFLNHPRISILINRRDEDIFRYLTNLQVQDLRHISMGYKMKLYFQTNPYFTNMVIVKEFQRNRSGRLVSHSTPIRWHRGQEPQARRHGNQDASHSFFSWFSNHSLPEADRIAEIIKNDLWVNPLRYYLRERGSRIKRKKQEMKKRKTRGRCEVVIMEDAPDYYAVEDIFSEISDIDETIHDIKISDFMETTDYFETTDNEITDINENICDSENPDHNEVPNNETTDNNESADDHETTDNNESADDNNENPEDNNKNTDDNEENPNNNENTYGNNFFKGGFWGSHGNNQDSSDSDNEADEASDDEDNDGNEGDNEGSDDDGNEGDNEGSDDDDRDIEYYEKVIEDFDKDQADYEDVIEIISDESVEEEGIEEGIQQDEDIYEEGNYEEEGSEDVWEEGEDSDDSDLEDVLQVPNGWANPGKRGKTG.

2 disordered regions span residues 1–56 and 104–125; these read MDRP…EAAQ and GYGE…EASG. A Glycyl lysine isopeptide (Lys-Gly) (interchain with G-Cter in SUMO2) cross-link involves residue K11. Residues S18 and S20 each carry the phosphoserine modification. The segment covering 23–44 has biased composition (pro residues); that stretch reads RDPPPPPPPPPLLRLPLPPPQQ. Residues K163 and K165 each participate in a glycyl lysine isopeptide (Lys-Gly) (interchain with G-Cter in SUMO2) cross-link. Residues 175–207 are disordered; the sequence is EDEDERESMRSSRRRRRRRRRKQRKVKRESRER. Residues 185-202 show a composition bias toward basic residues; the sequence is SSRRRRRRRRRKQRKVKR. Residue T340 is modified to Phosphothreonine. Disordered stretches follow at residues 474-605 and 627-693; these read ENIC…DIEY and ISDE…GKTG. The span at 487–496 shows a compositional bias: polar residues; sequence VPNNETTDNN. Positions 509 to 519 are enriched in acidic residues; the sequence is ESADDNNENPE. The span at 531–542 shows a compositional bias: low complexity; that stretch reads NPNNNENTYGNN. Acidic residues-rich tracts occupy residues 559–602 and 627–675; these read SDSD…DDRD and ISDE…DLED. Residues S658, S668, and S671 each carry the phosphoserine modification.

The protein belongs to the nucleosome assembly protein (NAP) family. As to quaternary structure, interacts with histones. Interacts with CASK. Part of a complex containing CASK, TBR1 and TSPYL2. Post-translationally, phosphorylation at Ser-20 and/or Thr-340 impairs function on cell proliferation. Ubiquitously expressed, with highest levels in brain, testis and heart, and lowest levels in liver and pancreas.

Its subcellular location is the nucleus. The protein localises to the cytoplasm. Part of the CASK/TBR1/TSPYL2 transcriptional complex which modulates gene expression in response to neuronal synaptic activity, probably by facilitating nucleosome assembly. May inhibit cell proliferation by inducing p53-dependent CDKN1A expression. The protein is Testis-specific Y-encoded-like protein 2 (TSPYL2) of Homo sapiens (Human).